The chain runs to 516 residues: Glycosyltransferase-like protein gnt15 (516 aa).

Residues 1 to 24 (MSNFYNNNPRRNTFRLTERIKKKP) lie on the Cytoplasmic side of the membrane. The helical; Signal-anchor for type II membrane protein transmembrane segment at 25 to 45 (YQTLIVFILIFLFLYVFGPFG) threads the bilayer. Residues 46-516 (EKKSNNNNNN…NDNCLTREHW (471 aa)) lie on the Extracellular side of the membrane. Residue Asn152 is glycosylated (N-linked (GlcNAc...) asparagine). Residues 199-250 (DTSNNNNNNNNNNNNNNNNNNNNNNNNNNNNNNNENNDNDNGNNNNNNDNEK) form a disordered region. Positions 202–246 (NNNNNNNNNNNNNNNNNNNNNNNNNNNNNNNENNDNDNGNNNNNN) are enriched in low complexity. Asn386 and Asn412 each carry an N-linked (GlcNAc...) asparagine glycan.

This sequence belongs to the glycosyltransferase 8 family. Highly divergent.

It is found in the membrane. May have a role in modulating cell adhesion and glycosylation. Essential for development. The chain is Glycosyltransferase-like protein gnt15 (gnt15) from Dictyostelium discoideum (Social amoeba).